Here is a 453-residue protein sequence, read N- to C-terminus: Bifunctional protein GlmU (453 aa).

The segment at 1-226 (MTLDVVILAA…ALEVEGVNNR (226 aa)) is pyrophosphorylase. Residues 8–11 (LAAG), K22, Q73, 78–79 (GT), 99–101 (YGD), G136, E151, N166, and N224 contribute to the UDP-N-acetyl-alpha-D-glucosamine site. Residue D101 participates in Mg(2+) binding. N224 is a binding site for Mg(2+). The linker stretch occupies residues 227–247 (SQMAALERAYQRDRAERLLTE). Residues 248 to 453 (GVALADPARF…AGWKRPRKSS (206 aa)) form an N-acetyltransferase region. R330 and K348 together coordinate UDP-N-acetyl-alpha-D-glucosamine. H360 acts as the Proton acceptor in catalysis. Residues Y363 and N374 each coordinate UDP-N-acetyl-alpha-D-glucosamine. Acetyl-CoA contacts are provided by residues A377, 383 to 384 (NY), S402, A420, and R437.

The protein in the N-terminal section; belongs to the N-acetylglucosamine-1-phosphate uridyltransferase family. In the C-terminal section; belongs to the transferase hexapeptide repeat family. Homotrimer. Requires Mg(2+) as cofactor.

It localises to the cytoplasm. It catalyses the reaction alpha-D-glucosamine 1-phosphate + acetyl-CoA = N-acetyl-alpha-D-glucosamine 1-phosphate + CoA + H(+). The enzyme catalyses N-acetyl-alpha-D-glucosamine 1-phosphate + UTP + H(+) = UDP-N-acetyl-alpha-D-glucosamine + diphosphate. It participates in nucleotide-sugar biosynthesis; UDP-N-acetyl-alpha-D-glucosamine biosynthesis; N-acetyl-alpha-D-glucosamine 1-phosphate from alpha-D-glucosamine 6-phosphate (route II): step 2/2. The protein operates within nucleotide-sugar biosynthesis; UDP-N-acetyl-alpha-D-glucosamine biosynthesis; UDP-N-acetyl-alpha-D-glucosamine from N-acetyl-alpha-D-glucosamine 1-phosphate: step 1/1. Its pathway is bacterial outer membrane biogenesis; LPS lipid A biosynthesis. Functionally, catalyzes the last two sequential reactions in the de novo biosynthetic pathway for UDP-N-acetylglucosamine (UDP-GlcNAc). The C-terminal domain catalyzes the transfer of acetyl group from acetyl coenzyme A to glucosamine-1-phosphate (GlcN-1-P) to produce N-acetylglucosamine-1-phosphate (GlcNAc-1-P), which is converted into UDP-GlcNAc by the transfer of uridine 5-monophosphate (from uridine 5-triphosphate), a reaction catalyzed by the N-terminal domain. The sequence is that of Bifunctional protein GlmU from Chromohalobacter salexigens (strain ATCC BAA-138 / DSM 3043 / CIP 106854 / NCIMB 13768 / 1H11).